The chain runs to 94 residues: Co-chaperonin GroES (94 aa).

This sequence belongs to the GroES chaperonin family. As to quaternary structure, heptamer of 7 subunits arranged in a ring. Interacts with the chaperonin GroEL.

It localises to the cytoplasm. Its function is as follows. Together with the chaperonin GroEL, plays an essential role in assisting protein folding. The GroEL-GroES system forms a nano-cage that allows encapsulation of the non-native substrate proteins and provides a physical environment optimized to promote and accelerate protein folding. GroES binds to the apical surface of the GroEL ring, thereby capping the opening of the GroEL channel. The chain is Co-chaperonin GroES from Anoxybacillus flavithermus (strain DSM 21510 / WK1).